Consider the following 383-residue polypeptide: E3 ubiquitin-protein ligase Os04g0590900 (383 aa).

Residues 53 to 73 traverse the membrane as a helical segment; that stretch reads PVFSPLVIAIIGVLASAFLLV. The disordered stretch occupies residues 105-129; the sequence is GGAGSGGRHGHGQSRSHESWNVSPP. The RING-type; atypical zinc finger occupies 157–199; the sequence is CSVCLGEFSDGESLRLLPRCSHAFHQQCIDTWLKSHSNCPLCR. Disordered regions lie at residues 269 to 291 and 320 to 383; these read EANG…SSFD and LLAG…DHPM.

The protein resides in the membrane. It catalyses the reaction S-ubiquitinyl-[E2 ubiquitin-conjugating enzyme]-L-cysteine + [acceptor protein]-L-lysine = [E2 ubiquitin-conjugating enzyme]-L-cysteine + N(6)-ubiquitinyl-[acceptor protein]-L-lysine.. It functions in the pathway protein modification; protein ubiquitination. Functionally, possesses E3 ubiquitin-protein ligase in vitro. This Oryza sativa subsp. japonica (Rice) protein is E3 ubiquitin-protein ligase Os04g0590900.